The sequence spans 486 residues: Glutamyl-tRNA(Gln) amidotransferase subunit A (486 aa).

Catalysis depends on charge relay system residues lysine 76 and serine 151. Serine 175 functions as the Acyl-ester intermediate in the catalytic mechanism.

This sequence belongs to the amidase family. GatA subfamily. Heterotrimer of A, B and C subunits.

It catalyses the reaction L-glutamyl-tRNA(Gln) + L-glutamine + ATP + H2O = L-glutaminyl-tRNA(Gln) + L-glutamate + ADP + phosphate + H(+). Its function is as follows. Allows the formation of correctly charged Gln-tRNA(Gln) through the transamidation of misacylated Glu-tRNA(Gln) in organisms which lack glutaminyl-tRNA synthetase. The reaction takes place in the presence of glutamine and ATP through an activated gamma-phospho-Glu-tRNA(Gln). In Marinomonas sp. (strain MWYL1), this protein is Glutamyl-tRNA(Gln) amidotransferase subunit A.